The sequence spans 271 residues: Virulence regulon transcriptional activator VirF (271 aa).

The region spanning 167–265 (ERLQKFMEEN…GCTPSQARLT (99 aa)) is the HTH araC/xylS-type domain. DNA-binding regions (H-T-H motif) lie at residues 184–205 (SKFA…GTVY) and 232–255 (IVDI…RRRF).

Transcriptional activator of the Yersinia virulence regulon. This chain is Virulence regulon transcriptional activator VirF (virF), found in Yersinia enterocolitica.